The chain runs to 122 residues: uncharacterized protein (122 aa).

2 disordered regions span residues 1–30 (MGRE…DQPE) and 96–122 (FKSC…DAMG).

This is an uncharacterized protein from Homo sapiens (Human).